The following is a 142-amino-acid chain: Putative pre-16S rRNA nuclease (142 aa).

The protein belongs to the YqgF nuclease family.

It is found in the cytoplasm. In terms of biological role, could be a nuclease involved in processing of the 5'-end of pre-16S rRNA. The sequence is that of Putative pre-16S rRNA nuclease from Chloroflexus aggregans (strain MD-66 / DSM 9485).